Here is a 278-residue protein sequence, read N- to C-terminus: AXRPKPIWDVAHMVNDLELVDEYLGDGANGLELDVAFSDDGTAEKMYHGVPCDCFRSCKRTETFTKYMDYIRELTTPGNSKFNNNLILLIMDLKLNGIEPNVAYAAGKSVAEKLLSSYWQNGESGARAYIVLSLETITRPEFINGFRDAIKASGHEELFEKIGWDFSGNEDLGDIRRVYQKYGIDEHIWQGDGITNCLPRGDYRLTEAMKKKNDPDYKYTEKVYTWSIDKEASIRNALRLGVDAVMTNYPARVKSILNESEFSSTHRMATYEDNPWQK.

Residue His-12 is part of the active site. The Mg(2+) site is built by Glu-32 and Asp-34. The active-site Nucleophile is the His-48. Disulfide bonds link Cys-52–Cys-58 and Cys-54–Cys-197. Asp-92 provides a ligand contact to Mg(2+). N-linked (GlcNAc...) asparagine glycosylation occurs at Asn-258.

This sequence belongs to the arthropod phospholipase D family. Class II subfamily. Class IIb sub-subfamily. Expressed by the venom gland.

The protein resides in the secreted. It carries out the reaction an N-(acyl)-sphingosylphosphoethanolamine = an N-(acyl)-sphingosyl-1,3-cyclic phosphate + ethanolamine. The enzyme catalyses a 1-acyl-sn-glycero-3-phosphocholine = a 1-acyl-sn-glycero-2,3-cyclic phosphate + choline. The catalysed reaction is a 1-acyl-sn-glycero-3-phosphoethanolamine = a 1-acyl-sn-glycero-2,3-cyclic phosphate + ethanolamine. This toxin does not show activity on sphingomyelin (SM) and does not show dermonecrotic activities. This toxin is a member of dermonecrotic toxins that cleave the phosphodiester linkage between the phosphate and headgroup of certain phospholipids (sphingolipid and lysolipid substrates), forming an alcohol (often choline) and a cyclic phosphate. It may act on ceramide phosphoethanolamine (CPE), lysophosphatidylcholine (LPC) and lysophosphatidylethanolamine (LPE), but not on lysophosphatidylserine (LPS), and lysophosphatidylglycerol (LPG). It may act by transphosphatidylation, releasing exclusively cyclic phosphate products as second products. The polypeptide is Dermonecrotic toxin LbSicTox-betaIA1a (Loxosceles boneti (North American fiddleback spider)).